Reading from the N-terminus, the 567-residue chain is Dihydroxy-acid dehydratase (567 aa).

Cys57 is a [2Fe-2S] cluster binding site. Asp89 serves as a coordination point for Mg(2+). Cys130 is a [2Fe-2S] cluster binding site. Residues Asp131 and Lys132 each contribute to the Mg(2+) site. Lys132 carries the post-translational modification N6-carboxylysine. Cys202 is a binding site for [2Fe-2S] cluster. Mg(2+) is bound at residue Glu453. Ser479 (proton acceptor) is an active-site residue.

This sequence belongs to the IlvD/Edd family. Homodimer. [2Fe-2S] cluster serves as cofactor. Mg(2+) is required as a cofactor.

The enzyme catalyses (2R)-2,3-dihydroxy-3-methylbutanoate = 3-methyl-2-oxobutanoate + H2O. It carries out the reaction (2R,3R)-2,3-dihydroxy-3-methylpentanoate = (S)-3-methyl-2-oxopentanoate + H2O. Its pathway is amino-acid biosynthesis; L-isoleucine biosynthesis; L-isoleucine from 2-oxobutanoate: step 3/4. The protein operates within amino-acid biosynthesis; L-valine biosynthesis; L-valine from pyruvate: step 3/4. In terms of biological role, functions in the biosynthesis of branched-chain amino acids. Catalyzes the dehydration of (2R,3R)-2,3-dihydroxy-3-methylpentanoate (2,3-dihydroxy-3-methylvalerate) into 2-oxo-3-methylpentanoate (2-oxo-3-methylvalerate) and of (2R)-2,3-dihydroxy-3-methylbutanoate (2,3-dihydroxyisovalerate) into 2-oxo-3-methylbutanoate (2-oxoisovalerate), the penultimate precursor to L-isoleucine and L-valine, respectively. In Nocardioides sp. (strain ATCC BAA-499 / JS614), this protein is Dihydroxy-acid dehydratase.